The chain runs to 425 residues: Serine hydroxymethyltransferase (425 aa).

(6S)-5,6,7,8-tetrahydrofolate-binding positions include L124 and 128 to 130; that span reads GHL. An N6-(pyridoxal phosphate)lysine modification is found at K233.

The protein belongs to the SHMT family. Homodimer. Requires pyridoxal 5'-phosphate as cofactor.

Its subcellular location is the cytoplasm. The catalysed reaction is (6R)-5,10-methylene-5,6,7,8-tetrahydrofolate + glycine + H2O = (6S)-5,6,7,8-tetrahydrofolate + L-serine. It functions in the pathway one-carbon metabolism; tetrahydrofolate interconversion. It participates in amino-acid biosynthesis; glycine biosynthesis; glycine from L-serine: step 1/1. Catalyzes the reversible interconversion of serine and glycine with tetrahydrofolate (THF) serving as the one-carbon carrier. This reaction serves as the major source of one-carbon groups required for the biosynthesis of purines, thymidylate, methionine, and other important biomolecules. Also exhibits THF-independent aldolase activity toward beta-hydroxyamino acids, producing glycine and aldehydes, via a retro-aldol mechanism. The protein is Serine hydroxymethyltransferase of Clavibacter michiganensis subsp. michiganensis (strain NCPPB 382).